The chain runs to 532 residues: Egg peptide speract receptor (532 aa).

The signal sequence occupies residues 1–30 (MGLPMMLQQYCWAACLVICIAISSVDDVGA). The Extracellular portion of the chain corresponds to 31–491 (EQNYGREAVE…VVCEGSTAPP (461 aa)). 4 SRCR domains span residues 43 to 144 (IRLI…VECL), 153 to 257 (LRMI…VVCK), 264 to 366 (IRLM…VVCA), and 382 to 485 (VRIV…VVCE). 12 disulfides stabilise this stretch: cysteine 68–cysteine 133, cysteine 81–cysteine 143, cysteine 112–cysteine 122, cysteine 178–cysteine 244, cysteine 191–cysteine 256, cysteine 223–cysteine 233, cysteine 289–cysteine 355, cysteine 302–cysteine 365, cysteine 335–cysteine 345, cysteine 406–cysteine 475, cysteine 419–cysteine 484, and cysteine 454–cysteine 465. N-linked (GlcNAc...) asparagine glycans are attached at residues asparagine 78 and asparagine 115. The N-linked (GlcNAc...) asparagine glycan is linked to asparagine 459. The helical transmembrane segment at 492–520 (SGMSIAVIGGAAGGGVAGLAVAAFAFYYI) threads the bilayer. Over 521–532 (KFVKPAGGGGQA) the chain is Cytoplasmic.

Its subcellular location is the membrane. In terms of biological role, receptor for the egg peptide speract. The chain is Egg peptide speract receptor from Strongylocentrotus purpuratus (Purple sea urchin).